Consider the following 435-residue polypeptide: Aspartate--tRNA(Asp/Asn) ligase (435 aa).

E163 serves as a coordination point for L-aspartate. Residues 185–188 (QLYK) form an aspartate region. R206 contacts L-aspartate. Residues 206–208 (RAE), 214–216 (RHL), and E358 each bind ATP. Residues S361 and R365 each coordinate L-aspartate. An ATP-binding site is contributed by 406 to 409 (GAER).

This sequence belongs to the class-II aminoacyl-tRNA synthetase family. Type 2 subfamily. Homodimer.

The protein localises to the cytoplasm. The catalysed reaction is tRNA(Asx) + L-aspartate + ATP = L-aspartyl-tRNA(Asx) + AMP + diphosphate. Its function is as follows. Aspartyl-tRNA synthetase with relaxed tRNA specificity since it is able to aspartylate not only its cognate tRNA(Asp) but also tRNA(Asn). Reaction proceeds in two steps: L-aspartate is first activated by ATP to form Asp-AMP and then transferred to the acceptor end of tRNA(Asp/Asn). Is slightly more efficient at aminoacylating tRNA(Asn) over tRNA(Asp). This chain is Aspartate--tRNA(Asp/Asn) ligase (aspS2), found in Deinococcus radiodurans (strain ATCC 13939 / DSM 20539 / JCM 16871 / CCUG 27074 / LMG 4051 / NBRC 15346 / NCIMB 9279 / VKM B-1422 / R1).